The following is a 424-amino-acid chain: Homeobox-containing protein 1 (424 aa).

Residues 1–30 (MLFTIEQLELIKKLQHTGMSSDQLLKAFGE) enclose the HNF-p1 domain. Residues 103-199 (SQRTPMKEIT…PNKLAAFLAD (97 aa)) form the POU-specific atypical domain. A DNA-binding region (homeobox) is located at residues 215-291 (QRRERYVFRP…NKRKELRRRS (77 aa)). Residues 291–345 (SAEASAASTSSASSSASSTANHDSVSVSSMSPRDEETSSRNTTPETAISPSPAVS) form a disordered region. Residues 293–310 (EASAASTSSASSSASSTA) are compositionally biased toward low complexity. Composition is skewed to polar residues over residues 311–321 (NHDSVSVSSMS) and 329–345 (SRNT…PAVS).

The protein belongs to the HMBOX1 homeobox family. As to expression, expressed in both AWC neurons. Also expressed in the FLP mechanosensory neurons.

The protein resides in the nucleus. Transcriptional repressor which maintains cell fate asymmetry of AWC neurons in adults by repressing the expression of multiple AWC (OFF) genes, including srsx-3 in the AWC (ON) neuron. The polypeptide is Homeobox-containing protein 1 (Caenorhabditis elegans).